The sequence spans 197 residues: Probable calcium-binding protein CML21 (197 aa).

Residues Met-1–His-33 form a disordered region. Positions Ser-9 to Gln-30 are enriched in low complexity. 3 consecutive EF-hand domains span residues Ala-37–Arg-72, Glu-126–Pro-161, and Ala-164–Asn-197. The Ca(2+) site is built by Asp-50, Asp-52, Asp-54, Glu-61, Asp-139, Asp-141, Asp-143, Tyr-145, Glu-150, Asp-177, Asp-179, Asp-181, Arg-183, and Glu-188.

Potential calcium sensor. This chain is Probable calcium-binding protein CML21 (CML21), found in Oryza sativa subsp. japonica (Rice).